Here is a 181-residue protein sequence, read N- to C-terminus: Large ribosomal subunit protein uL6 (181 aa).

The protein belongs to the universal ribosomal protein uL6 family. Part of the 50S ribosomal subunit.

Functionally, this protein binds to the 23S rRNA, and is important in its secondary structure. It is located near the subunit interface in the base of the L7/L12 stalk, and near the tRNA binding site of the peptidyltransferase center. The sequence is that of Large ribosomal subunit protein uL6 from Coprothermobacter proteolyticus (strain ATCC 35245 / DSM 5265 / OCM 4 / BT).